The chain runs to 163 residues: Endoribonuclease YbeY (163 aa).

Zn(2+) is bound by residues histidine 129, histidine 133, and histidine 139.

It belongs to the endoribonuclease YbeY family. Requires Zn(2+) as cofactor.

The protein resides in the cytoplasm. Functionally, single strand-specific metallo-endoribonuclease involved in late-stage 70S ribosome quality control and in maturation of the 3' terminus of the 16S rRNA. In Picosynechococcus sp. (strain ATCC 27264 / PCC 7002 / PR-6) (Agmenellum quadruplicatum), this protein is Endoribonuclease YbeY.